Here is a 389-residue protein sequence, read N- to C-terminus: Chalcone synthase 1A (389 aa).

Residue Cys-164 is part of the active site.

Belongs to the thiolase-like superfamily. Chalcone/stilbene synthases family.

It carries out the reaction (E)-4-coumaroyl-CoA + 3 malonyl-CoA + 3 H(+) = 2',4,4',6'-tetrahydroxychalcone + 3 CO2 + 4 CoA. Its pathway is secondary metabolite biosynthesis; flavonoid biosynthesis. The primary product of this enzyme is 4,2',4',6'-tetrahydroxychalcone (also termed naringenin-chalcone or chalcone) which can under specific conditions spontaneously isomerize into naringenin. The polypeptide is Chalcone synthase 1A (CHS1A) (Solanum tuberosum (Potato)).